The following is a 437-amino-acid chain: Purple acid phosphatase 21 (437 aa).

The first 25 residues, 1-25 (MKKMKIFGFLISFSLFFLSPFVCQA), serve as a signal peptide directing secretion. An N-linked (GlcNAc...) asparagine glycan is attached at Asn-30. 3 residues coordinate Fe cation: Asp-152, Asp-179, and Tyr-182. Asp-179 contacts Zn(2+). Positions 212 and 296 each coordinate Zn(2+). Substrate is bound at residue Asn-212. The active-site Proton donor is His-306. A Zn(2+)-binding site is contributed by His-333. 333 to 335 (HVH) is a binding site for substrate. His-335 contacts Fe cation.

The protein belongs to the metallophosphoesterase superfamily. Purple acid phosphatase family. As to quaternary structure, homodimer. Fe cation serves as cofactor. Requires Zn(2+) as cofactor. In terms of tissue distribution, expressed flowers and siliques.

The protein localises to the secreted. The enzyme catalyses a phosphate monoester + H2O = an alcohol + phosphate. The sequence is that of Purple acid phosphatase 21 (PAP21) from Arabidopsis thaliana (Mouse-ear cress).